The chain runs to 324 residues: MSIRVGIVGISGFGGGEAMRLVAGHPSFELVYAAGEGSAGQRLAERFPGVPAKLADLVIEKWDPARLPSLDVLFASLPTGASRDALARVPDDVKIVDIGGDHRYADGWTYGLADVWPQEIASKTRIANPGCFPAAALTPLAPLLADKLISPDTIVIDAKTGISGAGRGGGTGFGYAESNENLIPYGLLRHVHMPEIERSIARISGGSATGLVFTPHLVPMTRGILATIYARGRATTAQCLDAARRFYEGSAFVRVTDKPPQTKWAAGSNLAFVSYAADPERNLVIALGVVDNLGKGAAGQAVQNANLMCGLPETAGLEGAPVWP.

Residue Cys131 is part of the active site.

This sequence belongs to the NAGSA dehydrogenase family. Type 1 subfamily.

It is found in the cytoplasm. The catalysed reaction is N-acetyl-L-glutamate 5-semialdehyde + phosphate + NADP(+) = N-acetyl-L-glutamyl 5-phosphate + NADPH + H(+). It participates in amino-acid biosynthesis; L-arginine biosynthesis; N(2)-acetyl-L-ornithine from L-glutamate: step 3/4. Its function is as follows. Catalyzes the NADPH-dependent reduction of N-acetyl-5-glutamyl phosphate to yield N-acetyl-L-glutamate 5-semialdehyde. This chain is N-acetyl-gamma-glutamyl-phosphate reductase, found in Bradyrhizobium sp. (strain BTAi1 / ATCC BAA-1182).